The chain runs to 515 residues: Bifunctional purine biosynthesis protein PurH (515 aa).

Residues 1-145 (MTKRALISVS…KNHASVTVVV (145 aa)) enclose the MGS-like domain.

This sequence belongs to the PurH family.

It carries out the reaction (6R)-10-formyltetrahydrofolate + 5-amino-1-(5-phospho-beta-D-ribosyl)imidazole-4-carboxamide = 5-formamido-1-(5-phospho-D-ribosyl)imidazole-4-carboxamide + (6S)-5,6,7,8-tetrahydrofolate. The enzyme catalyses IMP + H2O = 5-formamido-1-(5-phospho-D-ribosyl)imidazole-4-carboxamide. The protein operates within purine metabolism; IMP biosynthesis via de novo pathway; 5-formamido-1-(5-phospho-D-ribosyl)imidazole-4-carboxamide from 5-amino-1-(5-phospho-D-ribosyl)imidazole-4-carboxamide (10-formyl THF route): step 1/1. It participates in purine metabolism; IMP biosynthesis via de novo pathway; IMP from 5-formamido-1-(5-phospho-D-ribosyl)imidazole-4-carboxamide: step 1/1. In Streptococcus pyogenes serotype M18 (strain MGAS8232), this protein is Bifunctional purine biosynthesis protein PurH.